The chain runs to 461 residues: uncharacterized protein (461 aa).

This is an uncharacterized protein from Saccharomyces cerevisiae (strain ATCC 204508 / S288c) (Baker's yeast).